Here is a 393-residue protein sequence, read N- to C-terminus: Arginine biosynthesis bifunctional protein ArgJ (393 aa).

6 residues coordinate substrate: Thr143, Lys168, Thr179, Glu265, Asn388, and Thr393. The active-site Nucleophile is Thr179.

Belongs to the ArgJ family. As to quaternary structure, heterotetramer of two alpha and two beta chains.

It localises to the cytoplasm. It carries out the reaction N(2)-acetyl-L-ornithine + L-glutamate = N-acetyl-L-glutamate + L-ornithine. The catalysed reaction is L-glutamate + acetyl-CoA = N-acetyl-L-glutamate + CoA + H(+). Its pathway is amino-acid biosynthesis; L-arginine biosynthesis; L-ornithine and N-acetyl-L-glutamate from L-glutamate and N(2)-acetyl-L-ornithine (cyclic): step 1/1. It functions in the pathway amino-acid biosynthesis; L-arginine biosynthesis; N(2)-acetyl-L-ornithine from L-glutamate: step 1/4. In terms of biological role, catalyzes two activities which are involved in the cyclic version of arginine biosynthesis: the synthesis of N-acetylglutamate from glutamate and acetyl-CoA as the acetyl donor, and of ornithine by transacetylation between N(2)-acetylornithine and glutamate. The chain is Arginine biosynthesis bifunctional protein ArgJ from Syntrophotalea carbinolica (strain DSM 2380 / NBRC 103641 / GraBd1) (Pelobacter carbinolicus).